We begin with the raw amino-acid sequence, 143 residues long: Small ribosomal subunit protein uS9 (143 aa).

The disordered stretch occupies residues 118 to 143; the sequence is DSRRTEPHKPNRSTKGPRAKRQKSYR. The segment covering 127–143 has biased composition (basic residues); it reads PNRSTKGPRAKRQKSYR.

Belongs to the universal ribosomal protein uS9 family.

This Thermococcus sibiricus (strain DSM 12597 / MM 739) protein is Small ribosomal subunit protein uS9.